The sequence spans 237 residues: Large ribosomal subunit protein uL1 (237 aa).

This sequence belongs to the universal ribosomal protein uL1 family. Part of the 50S ribosomal subunit.

In terms of biological role, binds directly to 23S rRNA. The L1 stalk is quite mobile in the ribosome, and is involved in E site tRNA release. Its function is as follows. Protein L1 is also a translational repressor protein, it controls the translation of the L11 operon by binding to its mRNA. The polypeptide is Large ribosomal subunit protein uL1 (Nocardia farcinica (strain IFM 10152)).